A 78-amino-acid polypeptide reads, in one-letter code: Large ribosomal subunit protein bL28 (78 aa).

The tract at residues 1-29 (MSAHCQVTGRKPSFGKSVSHSHRRTSRRW) is disordered.

The protein belongs to the bacterial ribosomal protein bL28 family.

The chain is Large ribosomal subunit protein bL28 from Corynebacterium glutamicum (strain ATCC 13032 / DSM 20300 / JCM 1318 / BCRC 11384 / CCUG 27702 / LMG 3730 / NBRC 12168 / NCIMB 10025 / NRRL B-2784 / 534).